Here is a 593-residue protein sequence, read N- to C-terminus: Potassium channel KAT6 (593 aa).

Topologically, residues 1 to 33 (MAASRSELLRPAFGEPSPSLGPFVVNPHTCSYR) are cytoplasmic. A helical membrane pass occupies residues 34–54 (WWQKFLIVLVLYTAWASPFEL). The Extracellular segment spans residues 55-64 (AMEKSASAAL). The chain crosses the membrane as a helical span at residues 65–85 (AVTELVVDAFFAVDIAVSFFV). At 86 to 106 (AYRDASTGLLVTDRKKIATRH) the chain is on the cytoplasmic side. The chain crosses the membrane as a helical span at residues 107–129 (LARPCLALDVASTIPLQMIYRIV). The Extracellular portion of the chain corresponds to 130-138 (SGKRQALYG). The helical; Voltage-sensor transmembrane segment at 139-159 (LLNLLRLWRLRRVSKLFARLE) threads the bilayer. Residues 160-173 (KDIRFSYLWTRLIK) are Cytoplasmic-facing. Residues 174 to 194 (LLYVTLFAVHFASCIYLWMAF) form a helical membrane-spanning segment. Residues 195–221 (HHKAKELTWIGSQFHGFEDRSVWFCYT) lie on the Extracellular side of the membrane. The segment at residues 222-241 (CAVYWSITTLATVGYGDLHA) is an intramembrane region (pore-forming). At 242–247 (ANTGEM) the chain is on the extracellular side. A helical membrane pass occupies residues 248–268 (LFSIAFMLFNMGLTSYIIGNI). Residues 269–593 (TNLVVHETTN…RDGDHLFFSW (325 aa)) are Cytoplasmic-facing. 350–470 (LFQGVSDKLV…VVVFSNFVLY (121 aa)) contacts a nucleoside 3',5'-cyclic phosphate. One can recognise a KHA domain in the interval 522–593 (RVSIHEHLLN…RDGDHLFFSW (72 aa)).

This sequence belongs to the potassium channel family. Plant (TC 1.A.1.4) subfamily.

The protein resides in the membrane. In terms of biological role, probable inward-rectifying potassium channel. Assuming opened or closed conformations in response to the voltage difference across the membrane, the channel is activated by hyperpolarization. The protein is Potassium channel KAT6 of Oryza sativa subsp. japonica (Rice).